Reading from the N-terminus, the 343-residue chain is S-adenosylmethionine:tRNA ribosyltransferase-isomerase (343 aa).

The protein belongs to the QueA family. As to quaternary structure, monomer.

The protein localises to the cytoplasm. The catalysed reaction is 7-aminomethyl-7-carbaguanosine(34) in tRNA + S-adenosyl-L-methionine = epoxyqueuosine(34) in tRNA + adenine + L-methionine + 2 H(+). It participates in tRNA modification; tRNA-queuosine biosynthesis. In terms of biological role, transfers and isomerizes the ribose moiety from AdoMet to the 7-aminomethyl group of 7-deazaguanine (preQ1-tRNA) to give epoxyqueuosine (oQ-tRNA). This chain is S-adenosylmethionine:tRNA ribosyltransferase-isomerase, found in Geobacter metallireducens (strain ATCC 53774 / DSM 7210 / GS-15).